Here is a 155-residue protein sequence, read N- to C-terminus: Ribonuclease H (155 aa).

Positions 1–143 constitute an RNase H type-1 domain; the sequence is MNQVEIYTDG…ADALANRGVD (143 aa). Mg(2+) is bound by residues Asp-9, Glu-47, Asp-69, and Asp-135.

This sequence belongs to the RNase H family. As to quaternary structure, monomer. Mg(2+) serves as cofactor.

It is found in the cytoplasm. It catalyses the reaction Endonucleolytic cleavage to 5'-phosphomonoester.. In terms of biological role, endonuclease that specifically degrades the RNA of RNA-DNA hybrids. This is Ribonuclease H from Verminephrobacter eiseniae (strain EF01-2).